The sequence spans 448 residues: tRNA-2-methylthio-N(6)-dimethylallyladenosine synthase (448 aa).

The MTTase N-terminal domain occupies 2–120 (KKYRIIVFGC…LPELIGKVIE (119 aa)). [4Fe-4S] cluster-binding residues include Cys11, Cys47, Cys81, Cys158, Cys162, and Cys165. A Radical SAM core domain is found at 144–374 (RKEGVRAWVT…IKLQNKISLE (231 aa)). The 64-residue stretch at 377 to 440 (EEEVGQTQEV…LAHLTGILSY (64 aa)) folds into the TRAM domain.

It belongs to the methylthiotransferase family. MiaB subfamily. In terms of assembly, monomer. Requires [4Fe-4S] cluster as cofactor.

It is found in the cytoplasm. The enzyme catalyses N(6)-dimethylallyladenosine(37) in tRNA + (sulfur carrier)-SH + AH2 + 2 S-adenosyl-L-methionine = 2-methylsulfanyl-N(6)-dimethylallyladenosine(37) in tRNA + (sulfur carrier)-H + 5'-deoxyadenosine + L-methionine + A + S-adenosyl-L-homocysteine + 2 H(+). In terms of biological role, catalyzes the methylthiolation of N6-(dimethylallyl)adenosine (i(6)A), leading to the formation of 2-methylthio-N6-(dimethylallyl)adenosine (ms(2)i(6)A) at position 37 in tRNAs that read codons beginning with uridine. The protein is tRNA-2-methylthio-N(6)-dimethylallyladenosine synthase of Pelotomaculum thermopropionicum (strain DSM 13744 / JCM 10971 / SI).